The primary structure comprises 62 residues: Photosystem II reaction center protein Z (62 aa).

The next 2 membrane-spanning stretches (helical) occupy residues 8–28 (AVFALISTSLILLIGVPVVFA) and 41–61 (FSGTSLWIGLVFLVGILNSLI).

This sequence belongs to the PsbZ family. As to quaternary structure, PSII is composed of 1 copy each of membrane proteins PsbA, PsbB, PsbC, PsbD, PsbE, PsbF, PsbH, PsbI, PsbJ, PsbK, PsbL, PsbM, PsbT, PsbY, PsbZ, Psb30/Ycf12, at least 3 peripheral proteins of the oxygen-evolving complex and a large number of cofactors. It forms dimeric complexes.

The protein resides in the plastid. The protein localises to the chloroplast thylakoid membrane. Its function is as follows. May control the interaction of photosystem II (PSII) cores with the light-harvesting antenna, regulates electron flow through the 2 photosystem reaction centers. PSII is a light-driven water plastoquinone oxidoreductase, using light energy to abstract electrons from H(2)O, generating a proton gradient subsequently used for ATP formation. The polypeptide is Photosystem II reaction center protein Z (Pelargonium hortorum (Common geranium)).